We begin with the raw amino-acid sequence, 370 residues long: tRNA N6-adenosine threonylcarbamoyltransferase (370 aa).

The Fe cation site is built by histidine 122 and histidine 126. Residues 153–157 (LLSGG), aspartate 186, glycine 199, and asparagine 298 contribute to the substrate site. Residue aspartate 326 participates in Fe cation binding.

The protein belongs to the KAE1 / TsaD family. Requires Fe(2+) as cofactor.

Its subcellular location is the cytoplasm. It carries out the reaction L-threonylcarbamoyladenylate + adenosine(37) in tRNA = N(6)-L-threonylcarbamoyladenosine(37) in tRNA + AMP + H(+). Functionally, required for the formation of a threonylcarbamoyl group on adenosine at position 37 (t(6)A37) in tRNAs that read codons beginning with adenine. Is involved in the transfer of the threonylcarbamoyl moiety of threonylcarbamoyl-AMP (TC-AMP) to the N6 group of A37, together with TsaE and TsaB. TsaD likely plays a direct catalytic role in this reaction. This Granulibacter bethesdensis (strain ATCC BAA-1260 / CGDNIH1) protein is tRNA N6-adenosine threonylcarbamoyltransferase.